The following is a 143-amino-acid chain: Large ribosomal subunit protein uL13 (143 aa).

Belongs to the universal ribosomal protein uL13 family. In terms of assembly, part of the 50S ribosomal subunit.

In terms of biological role, this protein is one of the early assembly proteins of the 50S ribosomal subunit, although it is not seen to bind rRNA by itself. It is important during the early stages of 50S assembly. This is Large ribosomal subunit protein uL13 from Caldanaerobacter subterraneus subsp. tengcongensis (strain DSM 15242 / JCM 11007 / NBRC 100824 / MB4) (Thermoanaerobacter tengcongensis).